We begin with the raw amino-acid sequence, 696 residues long: Polyribonucleotide nucleotidyltransferase (696 aa).

Mg(2+) contacts are provided by D483 and D489. A KH domain is found at P550 to I609. The S1 motif domain occupies G619 to K687.

It belongs to the polyribonucleotide nucleotidyltransferase family. It depends on Mg(2+) as a cofactor.

The protein resides in the cytoplasm. The catalysed reaction is RNA(n+1) + phosphate = RNA(n) + a ribonucleoside 5'-diphosphate. Its function is as follows. Involved in mRNA degradation. Catalyzes the phosphorolysis of single-stranded polyribonucleotides processively in the 3'- to 5'-direction. The chain is Polyribonucleotide nucleotidyltransferase from Geotalea uraniireducens (strain Rf4) (Geobacter uraniireducens).